Here is a 176-residue protein sequence, read N- to C-terminus: ATP synthase subunit b (176 aa).

The chain crosses the membrane as a helical span at residues 24–43 (FAFRVVNFVIFAGIIWKAAG).

It belongs to the ATPase B chain family. As to quaternary structure, F-type ATPases have 2 components, F(1) - the catalytic core - and F(0) - the membrane proton channel. F(1) has five subunits: alpha(3), beta(3), gamma(1), delta(1), epsilon(1). F(0) has three main subunits: a(1), b(2) and c(10-14). The alpha and beta chains form an alternating ring which encloses part of the gamma chain. F(1) is attached to F(0) by a central stalk formed by the gamma and epsilon chains, while a peripheral stalk is formed by the delta and b chains.

Its subcellular location is the cell inner membrane. Its function is as follows. F(1)F(0) ATP synthase produces ATP from ADP in the presence of a proton or sodium gradient. F-type ATPases consist of two structural domains, F(1) containing the extramembraneous catalytic core and F(0) containing the membrane proton channel, linked together by a central stalk and a peripheral stalk. During catalysis, ATP synthesis in the catalytic domain of F(1) is coupled via a rotary mechanism of the central stalk subunits to proton translocation. In terms of biological role, component of the F(0) channel, it forms part of the peripheral stalk, linking F(1) to F(0). The polypeptide is ATP synthase subunit b (Nitratidesulfovibrio vulgaris (strain ATCC 29579 / DSM 644 / CCUG 34227 / NCIMB 8303 / VKM B-1760 / Hildenborough) (Desulfovibrio vulgaris)).